Consider the following 78-residue polypeptide: Large ribosomal subunit protein bL28 (78 aa).

Belongs to the bacterial ribosomal protein bL28 family.

This is Large ribosomal subunit protein bL28 from Proteus mirabilis (strain HI4320).